A 551-amino-acid polypeptide reads, in one-letter code: HTH-type transcriptional regulator SgrR (551 aa).

An HTH marR-type domain is found at 1–116 (MPSARLQQQF…LVSHLGRSFR (116 aa)). The H-T-H motif DNA-binding region spans 26–49 (LNELAALLSCSRRHMRTLLNTMQD). The segment at 163-492 (ELEADIAHHW…IDWQADAARW (330 aa)) is solute-binding.

Activates the small RNA gene sgrS under glucose-phosphate stress conditions as well as yfdZ. Represses its own transcription under both stress and non-stress conditions. Might act as a sensor of the intracellular accumulation of phosphoglucose by binding these molecules in its C-terminal solute-binding domain. This is HTH-type transcriptional regulator SgrR from Escherichia coli O1:K1 / APEC.